A 293-amino-acid chain; its full sequence is Putative serine protease 42 (293 aa).

A signal peptide spans 1–26; sequence MSSGGGSRGLLAWLLLLQPWPGQNWA. The interval 33-60 is disordered; that stretch reads LPSPLLSEEGGENPEASPAPGPEAGPPL. A Peptidase S1 domain is found at 80-293; sequence IVGGVDAEEG…IVSWGIGCGR (214 aa). A disulfide bridge connects residues Cys105 and Cys121. Catalysis depends on His120, which acts as the Charge relay system. A glycan (N-linked (GlcNAc...) asparagine) is linked at Asn141. Asp166 functions as the Charge relay system in the catalytic mechanism. Asn177 is a glycosylation site (N-linked (GlcNAc...) asparagine). 3 disulfide bridges follow: Cys200/Cys273, Cys232/Cys253, and Cys263/Cys291. Residue Ser267 is the Charge relay system of the active site. Asn276 carries an N-linked (GlcNAc...) asparagine glycan.

The protein belongs to the peptidase S1 family.

It localises to the cytoplasm. The protein localises to the cell membrane. Functionally, plays a role in spermatogenesis. Involved in germ cell survival during meiosis. The sequence is that of Putative serine protease 42 from Homo sapiens (Human).